Consider the following 215-residue polypeptide: Leucyl/phenylalanyl-tRNA--protein transferase (215 aa).

This sequence belongs to the L/F-transferase family.

It localises to the cytoplasm. The catalysed reaction is N-terminal L-lysyl-[protein] + L-leucyl-tRNA(Leu) = N-terminal L-leucyl-L-lysyl-[protein] + tRNA(Leu) + H(+). The enzyme catalyses N-terminal L-arginyl-[protein] + L-leucyl-tRNA(Leu) = N-terminal L-leucyl-L-arginyl-[protein] + tRNA(Leu) + H(+). It catalyses the reaction L-phenylalanyl-tRNA(Phe) + an N-terminal L-alpha-aminoacyl-[protein] = an N-terminal L-phenylalanyl-L-alpha-aminoacyl-[protein] + tRNA(Phe). Its function is as follows. Functions in the N-end rule pathway of protein degradation where it conjugates Leu, Phe and, less efficiently, Met from aminoacyl-tRNAs to the N-termini of proteins containing an N-terminal arginine or lysine. This Campylobacter jejuni (strain RM1221) protein is Leucyl/phenylalanyl-tRNA--protein transferase.